Reading from the N-terminus, the 335-residue chain is Biotin synthase (335 aa).

Residues 46-274 (YKVQLASLFS…KSKIRLSAGR (229 aa)) enclose the Radical SAM core domain. Cysteine 61, cysteine 65, and cysteine 68 together coordinate [4Fe-4S] cluster. [2Fe-2S] cluster is bound by residues cysteine 105, cysteine 137, cysteine 197, and arginine 269.

It belongs to the radical SAM superfamily. Biotin synthase family. Homodimer. [4Fe-4S] cluster serves as cofactor. Requires [2Fe-2S] cluster as cofactor.

The enzyme catalyses (4R,5S)-dethiobiotin + (sulfur carrier)-SH + 2 reduced [2Fe-2S]-[ferredoxin] + 2 S-adenosyl-L-methionine = (sulfur carrier)-H + biotin + 2 5'-deoxyadenosine + 2 L-methionine + 2 oxidized [2Fe-2S]-[ferredoxin]. It functions in the pathway cofactor biosynthesis; biotin biosynthesis; biotin from 7,8-diaminononanoate: step 2/2. Functionally, catalyzes the conversion of dethiobiotin (DTB) to biotin by the insertion of a sulfur atom into dethiobiotin via a radical-based mechanism. In Prochlorococcus marinus subsp. pastoris (strain CCMP1986 / NIES-2087 / MED4), this protein is Biotin synthase.